Consider the following 644-residue polypeptide: Protein ETHYLENE-INSENSITIVE 3-like 1b (644 aa).

Disordered stretches follow at residues Q47–V75 and E97–R131. Acidic residues predominate over residues A66–V75.

Belongs to the EIN3 family. In terms of tissue distribution, highly expressed in roots. Expressed at low levels in leaves and panicles.

It is found in the nucleus. In terms of biological role, transcription factor acting as a positive regulator in the ethylene response pathway. Involved in wound signaling by binding specifically to the DNA sequence 5'-ATGTACCT-3' found in the promoter of some wound-inducible genes. Binds directly to the DNA sequence 5'-TGTTACAAATACC-3' in the promoter of the GA20OX2 gene to activate its expression at the transcriptional level during ethylene signaling. In Oryza sativa subsp. japonica (Rice), this protein is Protein ETHYLENE-INSENSITIVE 3-like 1b.